The primary structure comprises 197 residues: Imidazoleglycerol-phosphate dehydratase (197 aa).

The protein belongs to the imidazoleglycerol-phosphate dehydratase family.

The protein resides in the cytoplasm. It catalyses the reaction D-erythro-1-(imidazol-4-yl)glycerol 3-phosphate = 3-(imidazol-4-yl)-2-oxopropyl phosphate + H2O. It participates in amino-acid biosynthesis; L-histidine biosynthesis; L-histidine from 5-phospho-alpha-D-ribose 1-diphosphate: step 6/9. The protein is Imidazoleglycerol-phosphate dehydratase of Pseudomonas aeruginosa (strain LESB58).